The following is a 287-amino-acid chain: 4-hydroxybenzoate octaprenyltransferase (287 aa).

Transmembrane regions (helical) follow at residues 21–39 (PIGTLLLLWPTLWALWLAA), 95–115 (VLALFAVLALISFALVLTMNP), 116–136 (LTIGLSFAALLLAVCYPFMKR), 138–158 (IPIPQLVLGMAFSWSIPMAYA), 161–181 (ANALPAVAWLVFLANLLWTIA), 213–233 (IIGALQLLTLLILLLVGQLSE), 234–251 (LGSSYYWSLLAAAALFVY), and 264–284 (CFQAFLNNNYVGALIFAGVVI).

The protein belongs to the UbiA prenyltransferase family. It depends on Mg(2+) as a cofactor.

The protein resides in the cell inner membrane. It carries out the reaction all-trans-octaprenyl diphosphate + 4-hydroxybenzoate = 4-hydroxy-3-(all-trans-octaprenyl)benzoate + diphosphate. The protein operates within cofactor biosynthesis; ubiquinone biosynthesis. Its function is as follows. Catalyzes the prenylation of para-hydroxybenzoate (PHB) with an all-trans polyprenyl group. Mediates the second step in the final reaction sequence of ubiquinone-8 (UQ-8) biosynthesis, which is the condensation of the polyisoprenoid side chain with PHB, generating the first membrane-bound Q intermediate 3-octaprenyl-4-hydroxybenzoate. This Aeromonas hydrophila subsp. hydrophila (strain ATCC 7966 / DSM 30187 / BCRC 13018 / CCUG 14551 / JCM 1027 / KCTC 2358 / NCIMB 9240 / NCTC 8049) protein is 4-hydroxybenzoate octaprenyltransferase.